The primary structure comprises 245 residues: 1-(5-phosphoribosyl)-5-[(5-phosphoribosylamino)methylideneamino] imidazole-4-carboxamide isomerase (245 aa).

The active-site Proton acceptor is the Asp-8. Residue Asp-130 is the Proton donor of the active site.

This sequence belongs to the HisA/HisF family.

The protein resides in the cytoplasm. The enzyme catalyses 1-(5-phospho-beta-D-ribosyl)-5-[(5-phospho-beta-D-ribosylamino)methylideneamino]imidazole-4-carboxamide = 5-[(5-phospho-1-deoxy-D-ribulos-1-ylimino)methylamino]-1-(5-phospho-beta-D-ribosyl)imidazole-4-carboxamide. It functions in the pathway amino-acid biosynthesis; L-histidine biosynthesis; L-histidine from 5-phospho-alpha-D-ribose 1-diphosphate: step 4/9. This is 1-(5-phosphoribosyl)-5-[(5-phosphoribosylamino)methylideneamino] imidazole-4-carboxamide isomerase from Pseudomonas syringae pv. tomato (strain ATCC BAA-871 / DC3000).